A 198-amino-acid polypeptide reads, in one-letter code: Thioredoxin reductase-like selenoprotein T homolog CG3887 (198 aa).

The signal sequence occupies residues 1 to 25 (MERLTGRNVALLVLCLCAGYALVFA). Cysteines 49 and 52 form a disulfide.

This sequence belongs to the SelWTH family. SELT subfamily.

The enzyme catalyses [thioredoxin]-dithiol + NADP(+) = [thioredoxin]-disulfide + NADPH + H(+). In terms of biological role, probably has thioredoxin reductase-like oxidoreductase activity. The polypeptide is Thioredoxin reductase-like selenoprotein T homolog CG3887 (Drosophila melanogaster (Fruit fly)).